The chain runs to 794 residues: K(+)-insensitive pyrophosphate-energized proton pump (794 aa).

Transmembrane regions (helical) follow at residues 20–40, 74–94, 102–122, 163–183, and 194–214; these read ALVAVIAVVALAALVLAGVLV, TLGVFAVVVFFLLMLLPADDW, IFFLIGAAFSAATGYIGMWLA, GVVGMFTVGLGLLGACCVVLV, and GFGLGAALIAMFMRVGGGIFT. Lysine 215 contacts substrate. Mg(2+)-binding residues include aspartate 218, aspartate 222, asparagine 245, and aspartate 248. 6 consecutive transmembrane segments (helical) span residues 264–284, 285–305, 321–341, 365–385, 422–442, and 446–466; these read YAVTLVAALILGKVAFGDFGL, AFPLLVPAIGVLTAMIGIFAV, GFFISAVISLVLVAVAVFVYL, ILALVAVAIGIVLAALIQQLT, AVYTALLIGLGVYGAFLLGGT, and LALFAVALAGTGLLTTVGVIV. Aspartate 476 contacts Mg(2+). 3 helical membrane passes run 508–528, 564–584, and 641–661; these read AITKGIAIATAVLAAAALFGS, VGLIAGAAVVFLFSGLAINAV, and IFIGFTLGVGALGAFLAGAIG. Residues aspartate 678, aspartate 704, and aspartate 708 each coordinate Ca(2+). Position 711 (lysine 711) interacts with substrate. The next 2 membrane-spanning stretches (helical) occupy residues 717-737 and 747-767; these read AINPLLKVMNLVALLIAPAVI and VVVRVLIAVVAFAVIAAAVYV.

The protein belongs to the H(+)-translocating pyrophosphatase (TC 3.A.10) family. K(+)-insensitive subfamily. As to quaternary structure, homodimer. Requires Mg(2+) as cofactor.

The protein localises to the cell membrane. The enzyme catalyses diphosphate + H2O + H(+)(in) = 2 phosphate + 2 H(+)(out). Its function is as follows. Proton pump that utilizes the energy of pyrophosphate hydrolysis as the driving force for proton movement across the membrane. Generates a proton motive force. The protein is K(+)-insensitive pyrophosphate-energized proton pump of Streptomyces coelicolor (strain ATCC BAA-471 / A3(2) / M145).